The chain runs to 266 residues: MSLISADNIVKIYQSHSLVGASARKTVLHDISISIGQGETVALLGRSGCGKSTLARLLVGLERPTSGEVRFRGVPLTKLDRSGMKAFRREVQLIFQDSPGAVNARSSVRAIIGEPLRHLTSLDETRREERIQELLRLVELPPEIADRLPAQVSGGQLQRICIARALAVNPKLIILDEAVSNLDIHLQASALALLTKLQQEGGIAYLFVTHDLRLVQKFAARCLVMDEGQIVEEIKTADLDSMRHPASRLLREAVLPPLPVRAVETN.

Residues 4–252 (ISADNIVKIY…RHPASRLLRE (249 aa)) form the ABC transporter domain. 45–52 (GRSGCGKS) lines the ATP pocket.

This sequence belongs to the ABC transporter superfamily. Nickel importer (TC 3.A.1.5.3) family. In terms of assembly, the complex is composed of two ATP-binding proteins (NikD and NikE), two transmembrane proteins (NikB and NikC) and a solute-binding protein (NikA).

The protein localises to the cell inner membrane. It carries out the reaction Ni(2+)(out) + ATP + H2O = Ni(2+)(in) + ADP + phosphate + H(+). In terms of biological role, part of the ABC transporter complex NikABCDE involved in nickel import. Responsible for energy coupling to the transport system. The protein is Nickel import ATP-binding protein NikE of Brucella suis biovar 1 (strain 1330).